Reading from the N-terminus, the 396-residue chain is NADH-quinone oxidoreductase subunit D (396 aa).

The protein belongs to the complex I 49 kDa subunit family. As to quaternary structure, NDH-1 is composed of 14 different subunits. Subunits NuoB, C, D, E, F, and G constitute the peripheral sector of the complex.

The protein localises to the cell inner membrane. The catalysed reaction is a quinone + NADH + 5 H(+)(in) = a quinol + NAD(+) + 4 H(+)(out). NDH-1 shuttles electrons from NADH, via FMN and iron-sulfur (Fe-S) centers, to quinones in the respiratory chain. The immediate electron acceptor for the enzyme in this species is believed to be ubiquinone. Couples the redox reaction to proton translocation (for every two electrons transferred, four hydrogen ions are translocated across the cytoplasmic membrane), and thus conserves the redox energy in a proton gradient. The protein is NADH-quinone oxidoreductase subunit D of Methylobacterium sp. (strain 4-46).